We begin with the raw amino-acid sequence, 266 residues long: Glutamate racemase (266 aa).

Substrate is bound by residues 9 to 10 (DS) and 41 to 42 (YG). The active-site Proton donor/acceptor is the cysteine 72. 73 to 74 (NT) provides a ligand contact to substrate. Cysteine 183 (proton donor/acceptor) is an active-site residue. 184–185 (TH) is a substrate binding site.

This sequence belongs to the aspartate/glutamate racemases family.

The enzyme catalyses L-glutamate = D-glutamate. It participates in cell wall biogenesis; peptidoglycan biosynthesis. In terms of biological role, provides the (R)-glutamate required for cell wall biosynthesis. This is Glutamate racemase from Listeria monocytogenes serotype 4b (strain CLIP80459).